Here is a 675-residue protein sequence, read N- to C-terminus: Myosin-binding protein 3 (675 aa).

A helical transmembrane segment spans residues 17–37; sequence ITVILVYAFLEWLLMFFIFLN. Disordered stretches follow at residues 225 to 274 and 286 to 315; these read LRSI…EEET and SKNF…TPTS. The segment covering 238–251 has biased composition (basic and acidic residues); sequence AKSRVSEDEQRNDD. The region spanning 355-453 is the GTD-binding domain; it reads RTIERLRETV…QLQRELEVYR (99 aa). The span at 474–496 shows a compositional bias: acidic residues; the sequence is CEADDDDKEEENREEDNSSEMDV. Disordered regions lie at residues 474–497, 542–565, and 582–605; these read CEAD…MDVD, DKES…GHGG, and AENE…GSDS. Residues 596–605 are compositionally biased toward basic and acidic residues; it reads SDEKNFGSDS. Positions 605–633 form a coiled coil; the sequence is SEKLEIIKQVDSVYERLQELETDGEFLKN.

Interacts with myosin XI-K.

Its subcellular location is the membrane. Membrane-anchored myosin receptors that define a distinct, plant-specific transport vesicle compartment. The chain is Myosin-binding protein 3 from Arabidopsis thaliana (Mouse-ear cress).